Reading from the N-terminus, the 157-residue chain is Transcription elongation factor GreA (157 aa).

It belongs to the GreA/GreB family.

Functionally, necessary for efficient RNA polymerase transcription elongation past template-encoded arresting sites. The arresting sites in DNA have the property of trapping a certain fraction of elongating RNA polymerases that pass through, resulting in locked ternary complexes. Cleavage of the nascent transcript by cleavage factors such as GreA or GreB allows the resumption of elongation from the new 3'terminus. GreA releases sequences of 2 to 3 nucleotides. The protein is Transcription elongation factor GreA of Caulobacter sp. (strain K31).